The following is a 1027-amino-acid chain: Presequence protease, mitochondrial (1027 aa).

Residues 1–22 constitute a mitochondrion transit peptide; the sequence is MIRQCRAGLRLCRALYQTSYRW. His-98 serves as a coordination point for Zn(2+). The Proton acceptor role is filled by Glu-101. The Zn(2+) site is built by His-102 and Glu-199. The cysteines at positions 113 and 550 are disulfide-linked. Residues 800-829 form a disordered region; the sequence is KKERKSIRPHVVEKSSSPSSSGSEISRRAT. Over residues 814–823 the composition is skewed to low complexity; it reads SSSPSSSGSE.

The protein belongs to the peptidase M16 family. PreP subfamily. As to quaternary structure, monomer and homodimer; homodimerization is induced by binding of the substrate. Zn(2+) is required as a cofactor. In terms of processing, a disulfide bond locks the enzyme in the closed conformation preventing substrate entry into the catalytic chamber.

The protein resides in the mitochondrion matrix. With respect to regulation, mainly exists in a closed and catalytically competent conformation but a closed-to-open switch allows substrate entry into the catalytic chamber. Substrate binding induces closure and dimerization. A disulfide bond may lock the enzyme in a closed conformation preventing substrate entry into the catalytic chamber, participating in redox regulation of the enzyme. Inhibited by metal-chelating agents. Inhibited by nickel and zinc excess, and slightly activated by manganese. Functionally, metalloendopeptidase of the mitochondrial matrix that functions in peptide cleavage and degradation rather than in protein processing. Has an ATP-independent activity. Specifically cleaves peptides in the range of 5 to 65 residues. Shows a preference for cleavage after small polar residues and before basic residues, but without any positional preference. Degrades the transit peptides of mitochondrial proteins after their cleavage. Also degrades other unstructured peptides. The protein is Presequence protease, mitochondrial (pitrm1) of Xenopus tropicalis (Western clawed frog).